The primary structure comprises 1194 residues: ATP-dependent RNA helicase DHX30 (1194 aa).

A compositionally biased stretch (basic and acidic residues) spans 1 to 10; that stretch reads MFSLDSFRKD. The tract at residues 1 to 27 is disordered; that stretch reads MFSLDSFRKDRAQHRQRQCKLPPPRLP. Phosphoserine is present on serine 6. The DRBM domain occupies 53–121; sequence PKNLLNSVIG…QAAAAACQLF (69 aa). The disordered stretch occupies residues 150 to 199; the sequence is ADSWWRPEPTMPPTSWRQLNPESIRPGGPGGLSRSLGREEEEDEEEELEE. Residues 188-199 are compositionally biased toward acidic residues; the sequence is EEEEDEEEELEE. Phosphoserine occurs at positions 226 and 380. The Helicase ATP-binding domain maps to 444 to 612; sequence LNAIEQHPVV…FGGCPVIKVP (169 aa). 457-464 contacts ATP; sequence GDTGCGKT. The DEAH box motif lies at 559–562; that stretch reads DEVH. The Helicase C-terminal domain maps to 654-827; that stretch reads LVTDLVLHID…NLVLQAKIHM (174 aa).

It belongs to the DEAD box helicase family. DEAH subfamily. In terms of assembly, identified in a complex with TFAM and SSBP1. Interacts (via N-terminus) with ZC3HAV1 (via N-terminal domain) in an RNA-independent manner. Found in a complex with GRSF1, DDX28, FASTKD2 and FASTKD5.

It localises to the cytoplasm. The protein localises to the mitochondrion. The protein resides in the mitochondrion matrix. It is found in the mitochondrion nucleoid. It catalyses the reaction ATP + H2O = ADP + phosphate + H(+). In terms of biological role, RNA-dependent helicase. Plays an important role in the assembly of the mitochondrial large ribosomal subunit. Required for optimal function of the zinc-finger antiviral protein ZC3HAV1. Associates with mitochondrial DNA. Involved in nervous system development and differentiation through its involvement in the up-regulation of a number of genes which are required for neurogenesis, including GSC, NCAM1, neurogenin, and NEUROD. In Pongo abelii (Sumatran orangutan), this protein is ATP-dependent RNA helicase DHX30 (DHX30).